Reading from the N-terminus, the 206-residue chain is Probable GTP-binding protein EngB (206 aa).

Residues 27 to 201 form the EngB-type G domain; that stretch reads SGIEVAFAGR…EEKLNQWYSK (175 aa). Residues 35-42, 62-66, 80-83, 147-150, and 180-182 each bind GTP; these read GRSNAGKS, GRTQL, DLPG, TKAD, and FSS. 2 residues coordinate Mg(2+): Ser42 and Thr64.

This sequence belongs to the TRAFAC class TrmE-Era-EngA-EngB-Septin-like GTPase superfamily. EngB GTPase family. It depends on Mg(2+) as a cofactor.

Functionally, necessary for normal cell division and for the maintenance of normal septation. The protein is Probable GTP-binding protein EngB of Idiomarina loihiensis (strain ATCC BAA-735 / DSM 15497 / L2-TR).